The sequence spans 282 residues: HTH-type transcriptional activator RhaR (282 aa).

In terms of domain architecture, HTH araC/xylS-type spans 179-277 (DKLITALAGS…GMTPVQWRHR (99 aa)). DNA-binding regions (H-T-H motif) lie at residues 196–217 (EKFC…RTQT) and 244–267 (VSEV…NREV).

Binds DNA as a dimer.

The protein resides in the cytoplasm. Activates expression of the rhaSR operon in response to L-rhamnose. The sequence is that of HTH-type transcriptional activator RhaR from Enterobacter sp. (strain 638).